Here is a 687-residue protein sequence, read N- to C-terminus: A-kinase anchor protein 8 (687 aa).

Positions 1-195 (MEQSYGGYGA…FLRGRGQGRF (195 aa)) are interaction with MCM2. The segment at 1–210 (MEQSYGGYGA…SSTFIRSDPF (210 aa)) is interaction with DPY30. Position 72 is a phosphoserine (serine 72). Residues 104 to 124 (SKEGGRGGISSGGEGMQDRDS) form a disordered region. Arginine 109 carries the asymmetric dimethylarginine; alternate modification. Arginine 109 carries the post-translational modification Omega-N-methylarginine; alternate. Residues 109–118 (RGGISSGGEG) show a composition bias toward gly residues. The interval 109-201 (RGGISSGGEG…QGRFQDRSNS (93 aa)) is interaction with DDX5. The segment at 127–152 (RFQPYESYDSRPCMPEHTPYRPSYSY) is nuclear matrix targeting site. The disordered stretch occupies residues 189 to 221 (GRGQGRFQDRSNSSTFIRSDPFMPPSASSEPLS). Serine 199 bears the Phosphoserine mark. Omega-N-methylarginine occurs at positions 233 and 277. The disordered stretch occupies residues 278 to 380 (SQTRIRDWPR…KQRRRDRMRD (103 aa)). Composition is skewed to basic and acidic residues over residues 281 to 295 (RIRD…ERFG) and 312 to 321 (PDAKLARADS). A Bipartite nuclear localization signal motif is present at residues 287–304 (RRRGFERFGPDNMGRKRK). A Glycyl lysine isopeptide (Lys-Gly) (interchain with G-Cter in SUMO2) cross-link involves residue lysine 315. A phosphoserine mark is found at serine 321, serine 326, and serine 337. Residues 322–332 (EGDLSENDDGA) show a composition bias toward acidic residues. Over residues 336–358 (RSGDEEFRGEDDLCDSRKQRGEK) the composition is skewed to basic and acidic residues. The interval 385–448 (RIQFACSVCK…NKKIEKRRQE (64 aa)) is involved in chromatin-binding. C2H2 AKAP95-type zinc fingers lie at residues 390-412 (CSVC…SKFH) and 479-502 (CLAC…SVDH). An involved in condensin complex recruitment region spans residues 523–565 (SVLNNKHIVKMLEKYLKGEDPFVNETADLETEGDENLGEEKET). Threonine 553 is subject to Phosphothreonine. Lysine 563 participates in a covalent cross-link: Glycyl lysine isopeptide (Lys-Gly) (interchain with G-Cter in SUMO2). An RII-binding region spans residues 568–585 (EVAAEVLAEVITAAVKAV). Residues 572 to 589 (EVLAEVITAAVKAVEGDG) form a required for interaction with MYCBP region. The disordered stretch occupies residues 606 to 687 (VDTAEAGSDS…DAEAKDTPTE (82 aa)). Over residues 633–648 (RNMEDMARGEAAEARN) the composition is skewed to basic and acidic residues. A compositionally biased stretch (low complexity) spans 649-666 (EAAVPAAAAGSPVPVIAI). A Phosphoserine modification is found at serine 659.

Belongs to the AKAP95 family. In terms of assembly, binds to dimeric RII-alpha regulatory subunit of PKA during mitosis. Interacts (via C-terminus) with FIGN. Interacts with NCAPD2, CCND1, CCND3, MCM2, RPS6KA1, PDE4A, CASP3. Interacts with DDX5, CCNE1. Interacts with NFKB1; detetcted in the cytoplasm. Interacts with MYCBP; MYCBP is translocated to the nucleus and the interaction prevents the association of the PKA catalytic subunit leading to suppression of PKA activity. Interacts with DPY30; mediating AKAP8 association with at least the MLL4/WBP7 HMT complex. Interacts with HDAC3; increased during mitosis. Interacts with GJA1; in the nucleus and in the nuclear membrane; the nuclear association increases with progress of cell cycle G1, S and G2 phase and decreases in M phase. In terms of processing, phosphorylated on tyrosine residues probably by SRC subfamily protein kinases; multiple phosphorylation is leading to dissociation from nuclear structures implicated in chromatin structural changes. Widely expressed. The protein has been detected in liver, fibroblasts, granulosa, myoblast, lymphoma and Sertoli cells.

It localises to the nucleus matrix. It is found in the nucleus. The protein localises to the nucleolus. The protein resides in the cytoplasm. Functionally, anchoring protein that mediates the subcellular compartmentation of cAMP-dependent protein kinase (PKA type II). Acts as an anchor for a PKA-signaling complex onto mitotic chromosomes, which is required for maintenance of chromosomes in a condensed form throughout mitosis. Recruits condensin complex subunit NCAPD2 to chromosomes required for chromatin condensation; the function appears to be independent from PKA-anchoring. May help to deliver cyclin D/E to CDK4 to facilitate cell cycle progression. Required for cell cycle G2/M transition and histone deacetylation during mitosis. In mitotic cells recruits HDAC3 to the vicinity of chromatin leading to deacetylation and subsequent phosphorylation at 'Ser-10' of histone H3; in this function may act redundantly with AKAP8L. Involved in nuclear retention of RPS6KA1 upon ERK activation thus inducing cell proliferation. May be involved in regulation of DNA replication by acting as scaffold for MCM2. Enhances HMT activity of the KMT2 family MLL4/WBP7 complex and is involved in transcriptional regulation. In a teratocarcinoma cell line is involved in retinoic acid-mediated induction of developmental genes implicating H3 'Lys-4' methylation. May be involved in recruitment of active CASP3 to the nucleus in apoptotic cells. May act as a carrier protein of GJA1 for its transport to the nucleus. May play a repressive role in the regulation of rDNA transcription. Preferentially binds GC-rich DNA in vitro. In cells, associates with ribosomal RNA (rRNA) chromatin, preferentially with rRNA promoter and transcribed regions. Involved in modulation of Toll-like receptor signaling. Required for the cAMP-dependent suppression of TNF-alpha in early stages of LPS-induced macrophage activation; the function probably implicates targeting of PKA to NFKB1. This chain is A-kinase anchor protein 8 (Akap8), found in Rattus norvegicus (Rat).